Here is a 205-residue protein sequence, read N- to C-terminus: Myb-related protein 305 (205 aa).

HTH myb-type domains follow at residues aspartate 10–leucine 62 and arginine 63–methionine 117. 2 consecutive DNA-binding regions (H-T-H motif) follow at residues tryptophan 38 to leucine 62 and tryptophan 90 to isoleucine 113.

As to expression, expressed only in flowers.

It localises to the nucleus. In terms of biological role, transcription factor. The protein is Myb-related protein 305 of Antirrhinum majus (Garden snapdragon).